The primary structure comprises 193 residues: dCTP deaminase (193 aa).

DCTP contacts are provided by residues 110-115 (RSSLAR), aspartate 128, 136-138 (VLE), tyrosine 171, lysine 178, and glutamine 182. The active-site Proton donor/acceptor is glutamate 138.

This sequence belongs to the dCTP deaminase family. In terms of assembly, homotrimer.

It carries out the reaction dCTP + H2O + H(+) = dUTP + NH4(+). Its pathway is pyrimidine metabolism; dUMP biosynthesis; dUMP from dCTP (dUTP route): step 1/2. Functionally, catalyzes the deamination of dCTP to dUTP. This chain is dCTP deaminase, found in Buchnera aphidicola subsp. Schizaphis graminum (strain Sg).